The chain runs to 145 residues: D-aminoacyl-tRNA deacylase (145 aa).

The short motif at 137-138 (GP) is the Gly-cisPro motif, important for rejection of L-amino acids element.

It belongs to the DTD family. In terms of assembly, homodimer.

The protein resides in the cytoplasm. The catalysed reaction is glycyl-tRNA(Ala) + H2O = tRNA(Ala) + glycine + H(+). The enzyme catalyses a D-aminoacyl-tRNA + H2O = a tRNA + a D-alpha-amino acid + H(+). Its function is as follows. An aminoacyl-tRNA editing enzyme that deacylates mischarged D-aminoacyl-tRNAs. Also deacylates mischarged glycyl-tRNA(Ala), protecting cells against glycine mischarging by AlaRS. Acts via tRNA-based rather than protein-based catalysis; rejects L-amino acids rather than detecting D-amino acids in the active site. By recycling D-aminoacyl-tRNA to D-amino acids and free tRNA molecules, this enzyme counteracts the toxicity associated with the formation of D-aminoacyl-tRNA entities in vivo and helps enforce protein L-homochirality. The polypeptide is D-aminoacyl-tRNA deacylase (Streptomyces avermitilis (strain ATCC 31267 / DSM 46492 / JCM 5070 / NBRC 14893 / NCIMB 12804 / NRRL 8165 / MA-4680)).